A 354-amino-acid chain; its full sequence is Phosphoribosylformylglycinamidine cyclo-ligase (354 aa).

It belongs to the AIR synthase family.

The protein localises to the cytoplasm. It catalyses the reaction 2-formamido-N(1)-(5-O-phospho-beta-D-ribosyl)acetamidine + ATP = 5-amino-1-(5-phospho-beta-D-ribosyl)imidazole + ADP + phosphate + H(+). It functions in the pathway purine metabolism; IMP biosynthesis via de novo pathway; 5-amino-1-(5-phospho-D-ribosyl)imidazole from N(2)-formyl-N(1)-(5-phospho-D-ribosyl)glycinamide: step 2/2. This is Phosphoribosylformylglycinamidine cyclo-ligase from Synechococcus sp. (strain JA-2-3B'a(2-13)) (Cyanobacteria bacterium Yellowstone B-Prime).